Consider the following 83-residue polypeptide: Small ribosomal subunit protein bS20 (83 aa).

The protein belongs to the bacterial ribosomal protein bS20 family.

In terms of biological role, binds directly to 16S ribosomal RNA. This chain is Small ribosomal subunit protein bS20, found in Leuconostoc citreum (strain KM20).